The sequence spans 169 residues: Type II secretion system protein H (169 aa).

Residues Met-1–Glu-29 constitute a propeptide, leader sequence. Residue Met-30 is modified to N-methylmethionine. A helical transmembrane segment spans residues Leu-32 to Ile-52.

This sequence belongs to the GSP H family. In terms of assembly, type II secretion is composed of four main components: the outer membrane complex, the inner membrane complex, the cytoplasmic secretion ATPase and the periplasm-spanning pseudopilus. Interacts with core component XpsG. Interacts with minor pseudopilins XpsI and XpsJ. Cleaved by prepilin peptidase. In terms of processing, methylated by prepilin peptidase at the amino group of the N-terminal phenylalanine once the leader sequence is cleaved by prepilin peptidase.

The protein resides in the cell inner membrane. In terms of biological role, component of the type II secretion system required for the energy-dependent secretion of extracellular factors such as proteases and toxins from the periplasm. Part of the pseudopilus tip complex that is critical for the recognition and binding of secretion substrates. This chain is Type II secretion system protein H (xpsH), found in Xanthomonas campestris pv. campestris (strain ATCC 33913 / DSM 3586 / NCPPB 528 / LMG 568 / P 25).